Consider the following 139-residue polypeptide: MKKTTIINAQLSYAIATLGHTETLTLCDAGLPIPNSSNRIDLALTKGIPSFLETLYAVTSEMFVERAILASEIKEKNPEILTALLAHLSQLATKQGNQIPVEFVSHEKFKKLTHDSKGIVRSGECSPYANIILVSGVPF.

The active-site Proton donor is histidine 20. Residues aspartate 28, histidine 106, and 128–130 contribute to the substrate site; that span reads YAN.

Belongs to the RbsD / FucU family. RbsD subfamily. In terms of assembly, homodecamer.

Its subcellular location is the cytoplasm. The catalysed reaction is beta-D-ribopyranose = beta-D-ribofuranose. It functions in the pathway carbohydrate metabolism; D-ribose degradation; D-ribose 5-phosphate from beta-D-ribopyranose: step 1/2. Its function is as follows. Catalyzes the interconversion of beta-pyran and beta-furan forms of D-ribose. The protein is D-ribose pyranase of Actinobacillus succinogenes (strain ATCC 55618 / DSM 22257 / CCUG 43843 / 130Z).